The chain runs to 232 residues: 5'-methylthioadenosine/S-adenosylhomocysteine nucleosidase (232 aa).

The active-site Proton acceptor is the Glu-12. Substrate-binding positions include Gly-78, Ile-152, and 173–174; that span reads ME. Asp-197 functions as the Proton donor in the catalytic mechanism.

It belongs to the PNP/UDP phosphorylase family. MtnN subfamily. As to quaternary structure, homodimer.

The enzyme catalyses S-adenosyl-L-homocysteine + H2O = S-(5-deoxy-D-ribos-5-yl)-L-homocysteine + adenine. The catalysed reaction is S-methyl-5'-thioadenosine + H2O = 5-(methylsulfanyl)-D-ribose + adenine. It catalyses the reaction 5'-deoxyadenosine + H2O = 5-deoxy-D-ribose + adenine. It functions in the pathway amino-acid biosynthesis; L-methionine biosynthesis via salvage pathway; S-methyl-5-thio-alpha-D-ribose 1-phosphate from S-methyl-5'-thioadenosine (hydrolase route): step 1/2. Functionally, catalyzes the irreversible cleavage of the glycosidic bond in both 5'-methylthioadenosine (MTA) and S-adenosylhomocysteine (SAH/AdoHcy) to adenine and the corresponding thioribose, 5'-methylthioribose and S-ribosylhomocysteine, respectively. Also cleaves 5'-deoxyadenosine, a toxic by-product of radical S-adenosylmethionine (SAM) enzymes, into 5-deoxyribose and adenine. Thus, is required for in vivo function of the radical SAM enzymes biotin synthase and lipoic acid synthase, that are inhibited by 5'-deoxyadenosine accumulation. The polypeptide is 5'-methylthioadenosine/S-adenosylhomocysteine nucleosidase (Pectobacterium carotovorum subsp. carotovorum (strain PC1)).